The chain runs to 428 residues: Light-independent protochlorophyllide reductase subunit N (428 aa).

Residues C29, C54, and C115 each contribute to the [4Fe-4S] cluster site.

It belongs to the BchN/ChlN family. As to quaternary structure, protochlorophyllide reductase is composed of three subunits; BchL, BchN and BchB. Forms a heterotetramer of two BchB and two BchN subunits. [4Fe-4S] cluster serves as cofactor.

The enzyme catalyses chlorophyllide a + oxidized 2[4Fe-4S]-[ferredoxin] + 2 ADP + 2 phosphate = protochlorophyllide a + reduced 2[4Fe-4S]-[ferredoxin] + 2 ATP + 2 H2O. It participates in porphyrin-containing compound metabolism; bacteriochlorophyll biosynthesis (light-independent). Functionally, component of the dark-operative protochlorophyllide reductase (DPOR) that uses Mg-ATP and reduced ferredoxin to reduce ring D of protochlorophyllide (Pchlide) to form chlorophyllide a (Chlide). This reaction is light-independent. The NB-protein (BchN-BchB) is the catalytic component of the complex. The polypeptide is Light-independent protochlorophyllide reductase subunit N (Cereibacter sphaeroides (strain KD131 / KCTC 12085) (Rhodobacter sphaeroides)).